Consider the following 365-residue polypeptide: Chorismate synthase (365 aa).

NADP(+)-binding residues include R48 and R54. Residues 125-127 (RSS), 238-239 (NA), G278, 293-297 (KPTSS), and R319 each bind FMN.

It belongs to the chorismate synthase family. As to quaternary structure, homotetramer. Requires FMNH2 as cofactor.

It catalyses the reaction 5-O-(1-carboxyvinyl)-3-phosphoshikimate = chorismate + phosphate. It functions in the pathway metabolic intermediate biosynthesis; chorismate biosynthesis; chorismate from D-erythrose 4-phosphate and phosphoenolpyruvate: step 7/7. Functionally, catalyzes the anti-1,4-elimination of the C-3 phosphate and the C-6 proR hydrogen from 5-enolpyruvylshikimate-3-phosphate (EPSP) to yield chorismate, which is the branch point compound that serves as the starting substrate for the three terminal pathways of aromatic amino acid biosynthesis. This reaction introduces a second double bond into the aromatic ring system. The polypeptide is Chorismate synthase (Alteromonas mediterranea (strain DSM 17117 / CIP 110805 / LMG 28347 / Deep ecotype)).